A 255-amino-acid polypeptide reads, in one-letter code: MSMPFYVSPEQLMKDRADYARKGIARGRSVVVAAYDGGIAFATENPSRALHKISEIYDRIAFAAVGKYNEFENLRVAGVRYADLRGYSYDRSDVDARGLANAYAQTLGTVFTTESKPLEVEIVVAQVGATAHDDQIYRLSYDGSVADEHGFVVMGGEAEQLGTAMTERWRPGLTLSEVLRLVREVLAGPPVDGSPREIPATHLEVAVLDRTRPRRAFRRVAGPVLDDLLASPAGTSGPTGEPGPAGTAATDGGDL.

A disordered region spans residues 228–255 (LLASPAGTSGPTGEPGPAGTAATDGGDL). Over residues 232–255 (PAGTSGPTGEPGPAGTAATDGGDL) the composition is skewed to low complexity.

Belongs to the peptidase T1A family. The 20S proteasome core is composed of 14 alpha and 14 beta subunits that assemble into four stacked heptameric rings, resulting in a barrel-shaped structure. The two inner rings, each composed of seven catalytic beta subunits, are sandwiched by two outer rings, each composed of seven alpha subunits. The catalytic chamber with the active sites is on the inside of the barrel. Has a gated structure, the ends of the cylinder being occluded by the N-termini of the alpha-subunits. Is capped by the proteasome-associated ATPase, ARC.

The protein resides in the cytoplasm. It functions in the pathway protein degradation; proteasomal Pup-dependent pathway. Its activity is regulated as follows. The formation of the proteasomal ATPase ARC-20S proteasome complex, likely via the docking of the C-termini of ARC into the intersubunit pockets in the alpha-rings, may trigger opening of the gate for substrate entry. Interconversion between the open-gate and close-gate conformations leads to a dynamic regulation of the 20S proteasome proteolysis activity. Component of the proteasome core, a large protease complex with broad specificity involved in protein degradation. The protein is Proteasome subunit alpha of Sanguibacter keddieii (strain ATCC 51767 / DSM 10542 / NCFB 3025 / ST-74).